A 98-amino-acid polypeptide reads, in one-letter code: NADH-ubiquinone oxidoreductase chain 4L (98 aa).

3 helical membrane passes run 1–21 (MSLT…GLLM), 29–49 (SLLC…MTIL), and 61–81 (IILL…LVMV).

It belongs to the complex I subunit 4L family. In terms of assembly, core subunit of respiratory chain NADH dehydrogenase (Complex I) which is composed of 45 different subunits.

The protein localises to the mitochondrion inner membrane. It catalyses the reaction a ubiquinone + NADH + 5 H(+)(in) = a ubiquinol + NAD(+) + 4 H(+)(out). Its function is as follows. Core subunit of the mitochondrial membrane respiratory chain NADH dehydrogenase (Complex I) which catalyzes electron transfer from NADH through the respiratory chain, using ubiquinone as an electron acceptor. Part of the enzyme membrane arm which is embedded in the lipid bilayer and involved in proton translocation. The protein is NADH-ubiquinone oxidoreductase chain 4L (MT-ND4L) of Stenoderma rufum (Red fruit bat).